A 508-amino-acid chain; its full sequence is Heat shock 70 kDa protein 14 (508 aa).

This sequence belongs to the heat shock protein 70 family. In terms of assembly, component of ribosome-associated complex (RAC).

The protein localises to the cytoplasm. Its subcellular location is the cytosol. Component of the ribosome-associated complex (RAC), a complex involved in folding or maintaining nascent polypeptides in a folding-competent state. The sequence is that of Heat shock 70 kDa protein 14 (hspa14) from Xenopus tropicalis (Western clawed frog).